Consider the following 502-residue polypeptide: CBL-interacting protein kinase 11 (502 aa).

One can recognise a Protein kinase domain in the interval 12–267; the sequence is YEVGKQLGQG…IPRIKRSTWY (256 aa). ATP-binding positions include 18-26 and K41; that span reads LGQGTFAKV. The active-site Proton acceptor is D135. Residues 153–182 are activation loop; the sequence is DFGLSALAESKRQDGLLHTTCGTPAYVAPE. In terms of domain architecture, NAF spans 297–333; the sequence is AECSTSEENQGSLSLPNLNAFDIISLSTGFNLSGFFE. The PPI stretch occupies residues 339 to 367; that stretch reads QEERFTTRQPVTTVLGKLKELAKRLKLKV. The disordered stretch occupies residues 447–502; the sequence is LQGEQQQSPLPPELPQDQLQPSLPQQEKQDMPEPPLLPQVPQEEVQTSIPAEQTKN. Residues 461–472 are compositionally biased toward low complexity; the sequence is PQDQLQPSLPQQ. The span at 493–502 shows a compositional bias: polar residues; the sequence is TSIPAEQTKN.

Belongs to the protein kinase superfamily. CAMK Ser/Thr protein kinase family. SNF1 subfamily. The cofactor is Mn(2+).

The enzyme catalyses L-seryl-[protein] + ATP = O-phospho-L-seryl-[protein] + ADP + H(+). It carries out the reaction L-threonyl-[protein] + ATP = O-phospho-L-threonyl-[protein] + ADP + H(+). In terms of biological role, CIPK serine-threonine protein kinases interact with CBL proteins. Binding of a CBL protein to the regulatory NAF domain of CIPK protein lead to the activation of the kinase in a calcium-dependent manner. In Oryza sativa subsp. japonica (Rice), this protein is CBL-interacting protein kinase 11 (CIPK11).